We begin with the raw amino-acid sequence, 235 residues long: Large ribosomal subunit protein uL1 (235 aa).

Belongs to the universal ribosomal protein uL1 family. Part of the 50S ribosomal subunit.

Functionally, binds directly to 23S rRNA. The L1 stalk is quite mobile in the ribosome, and is involved in E site tRNA release. In terms of biological role, protein L1 is also a translational repressor protein, it controls the translation of the L11 operon by binding to its mRNA. In Prochlorococcus marinus (strain MIT 9303), this protein is Large ribosomal subunit protein uL1.